Consider the following 501-residue polypeptide: Glucan endo-1,3-beta-glucosidase 3 (501 aa).

Positions 1-18 (MAALLLLFLFLFASSALS) are cleaved as a signal peptide. 2 N-linked (GlcNAc...) asparagine glycosylation sites follow: Asn88 and Asn107. Glu116 acts as the Proton donor in catalysis. Residues Asn171 and Asn253 are each glycosylated (N-linked (GlcNAc...) asparagine). Catalysis depends on Glu263, which acts as the Nucleophile. Residues Asn295, Asn353, and Asn357 are each glycosylated (N-linked (GlcNAc...) asparagine). Cys361 and Cys424 are joined by a disulfide. 4 N-linked (GlcNAc...) asparagine glycosylation sites follow: Asn451, Asn456, Asn457, and Asn466. The GPI-anchor amidated serine moiety is linked to residue Ser470. The propeptide at 471–501 (GCIPKYYHHPHASFGDLTLLSLLLIIALVFL) is removed in mature form.

It belongs to the glycosyl hydrolase 17 family. In terms of processing, contains two additional disulfide bonds.

The protein resides in the cell membrane. The catalysed reaction is Hydrolysis of (1-&gt;3)-beta-D-glucosidic linkages in (1-&gt;3)-beta-D-glucans.. This is Glucan endo-1,3-beta-glucosidase 3 from Arabidopsis thaliana (Mouse-ear cress).